Here is a 172-residue protein sequence, read N- to C-terminus: Myosin regulatory light chain 2, smooth muscle minor isoform (172 aa).

Position 2 is an N-acetylserine (Ser2). A Phosphothreonine; by MLCK modification is found at Thr19. Ser20 carries the post-translational modification Phosphoserine; by MLCK. EF-hand domains follow at residues 29-64 (SQIQ…LGKN), 98-133 (DPED…MGDR), and 134-169 (FTDE…GAKD). 4 residues coordinate Ca(2+): Asp42, Asn44, Asp46, and Asp53.

As to quaternary structure, myosin is a hexamer of 2 heavy chains and 4 light chains. Post-translationally, phosphorylation increases the actin-activated myosin ATPase activity and thereby regulates the contractile activity.

Functionally, myosin regulatory subunit that plays an important role in regulation of both smooth muscle and nonmuscle cell contractile activity. Implicated in cytokinesis, receptor capping, and cell locomotion. This chain is Myosin regulatory light chain 2, smooth muscle minor isoform, found in Gallus gallus (Chicken).